Reading from the N-terminus, the 579-residue chain is ERV-BabFcenv provirus ancestral Env polyprotein (579 aa).

The signal sequence occupies residues 1–22 (MISAVLNLPSTPLLPLLWFTLI). The interval 23–387 (IPASLTNPKF…LSSSNNIQKQ (365 aa)) is surface protein. Residues 23–523 (IPASLTNPKF…VWLLPVVQQM (501 aa)) are Extracellular-facing. 4 N-linked (GlcNAc...) asparagine glycosylation sites follow: N135, N203, N242, and N251. The CXXC motif lies at 255–258 (CFLC). N-linked (GlcNAc...) asparagine glycans are attached at residues N276, N312, and N337. The tract at residues 388 to 408 (AVFLPLIIGVSLASSLVASGL) is fusion peptide. Residues 388–579 (AVFLPLIIGV…LPTSDPNYAP (192 aa)) form a transmembrane protein region. Residues 453–469 (AQNRRALDLLTAEKGGT) carry the CKS-17 motif. C470 and C477 are disulfide-bonded. A CX6CC motif is present at residues 470–478 (CLFLGEECC). N-linked (GlcNAc...) asparagine glycosylation occurs at N482. Residues 524 to 544 (LPFLIPILILCLMLCLAPILI) form a helical membrane-spanning segment. The Cytoplasmic portion of the chain corresponds to 545–579 (KFLRARVQEITRVTFNQMLLHPYTQLPTSDPNYAP).

The protein belongs to the gamma type-C retroviral envelope protein family. HERV class-I F(c)1 env subfamily. Specific enzymatic cleavages in vivo yield the mature SU and TM proteins. Post-translationally, the CXXC motif is highly conserved across a broad range of retroviral envelope proteins. It is thought to participate in the formation of a labile disulfide bond possibly with the CX6CC motif present in the transmembrane domain.

The protein localises to the cell membrane. Its function is as follows. Retroviral envelope proteins mediate receptor recognition and membrane fusion during early infection. Endogenous envelope proteins may have kept, lost or modified their original function during evolution. The chain is ERV-BabFcenv provirus ancestral Env polyprotein from Papio anubis (Olive baboon).